The following is a 224-amino-acid chain: Mammalian ependymin-related protein 1 (224 aa).

A signal peptide spans 1–37; the sequence is MPARAPRRLVQGPRGTWLLGSLWVWVLCGLGMAGSLG. 3 disulfides stabilise this stretch: C42–C172, C88–C222, and C113–C210. N130 and N182 each carry an N-linked (GlcNAc...) asparagine glycan.

It belongs to the ependymin family. In terms of assembly, homodimer. In terms of processing, N-glycosylated; the glycan contains mannose-6-phosphate moieties. Detected in brain, small intestine and in soleus, extensor digitorum longus and white gastrocnemius (at protein level). Detected in brain and skeletal muscle, and at lower leavels in heart.

It localises to the lysosome lumen. The protein resides in the secreted. In terms of biological role, binds anionic lipids and gangliosides at acidic pH. The chain is Mammalian ependymin-related protein 1 (Epdr1) from Mus musculus (Mouse).